Consider the following 1802-residue polypeptide: MASSLAAQLSQIAANSTNQLNLKAQRISHSQSLIFDRKVAGSQDFDTIYDICNEGFQELCELDPRFAQFERTIFSEQSKVQERTEMNAAQNKELDAVLETFLALVGGKLLLSPAVKAVEWLVRRFRIHEYNTEFTILTFLPYHTTPLFLNLLSILPEDLTPTFKILNPYKKSSVNPPRHPLVHSATTNKPFFAALNRYTIQVSKEQAGHHALLTFWAGIVTESVAGMLDSARSGRRNIEKENHDDIIMRVLPVLNDGLAMKDVAELVIGCYMVCVAIAQKASLHDKVLDSLMEAVAESWTEETVNSGLVCLAVLAQKKPDTTLPKRVFKAILRLENPLQQLSETSKQHRASQLLLGLVAGCVQDLSKQKDTARLDFLSLMFESELLGEAELGSGMAIVLRASSNSHKDGAMSLDAQTHLADLVQHFSRSESLRPIFQKTVAESSFDIVAIEQNLQTVIESAPAPKALEDIEMEDAEKEEEQDNFAPALKSLTGSSFKGSYLSTQSIPVYDNLVRAFALGIGAQEKLDAFANLPALDKGNAAKSPQYLSFFVRVFSGSYPIGTRVAALNMVSSFLTTASIDMDLQALLPFVLVTLADPSERVRREAAGILTIIGSLHKNKKGDAPGGVWARDTIYGQDKQPKNIQWTPGRDLQKVFERALLPGLEEYVIDPDHIGRVLEATLRGSSVSDSESSELKKAVRLSFFTCLCSHAVHVPLYAPKLGLLKLLNRVEKAGGTTRTKELGSLLKSWREMDGQQAKDVCEKERVPVSEMESQIVLTVTPKERDAITVLLSNVSPYSGSLSPSFVGAIFGRMKDVWAKVPEDRQALAAENLFEISLEQSDSPLVDGCKDVLRSVELPGAVLSQFLQKIPSTVTDMEGLGPAPKRRRTSQSNMVAMTVKDEAALSELMEKMTFILELVDSSSPETHPELADGLFQTLAALHHFKSQVQSGMSYLLSLALGSLLAIVNRSKTIGKPQFDTSVIRADLVVDCVRTTDSPQVQNAALLLVAGLSVIAPELVLHSVMPIFTFMGSSVLKKDDDYSVSVIDQTIDQVVPALIQSLRNQKRDVVSGTSELLLSFTAAFEHIPSHRRLRLFHALITKLGTQDFLFAVLSMLANRYSMDKDVLILMTGLVSDANAPVELATYSKYLGLVSDSLKAKPGISQVLLGIGSDDGREPQKVAVDLLRALAYLFRHSSLKSKMAKAFAIVEGDEPQQIRALFSQILEQTLAIGDNMQDMKSVGQASGEVLSALFGTLSLVDFLDTIEVLLQRPNDELRRKVLRLLEGRLRQNPERDSPSQTRMLDFLSVLVKIVESSPDILLKHAAVACIDRIADKYGKKDPSKVIPAARVVASEVCIGQEDDRIRIMGVLCLASMAEVLGQAMIPALPDTLSRSLALLGLSLEDGKENTRLHDAVYSLFSALFVHLPYMISASHLDKVLVLSYKSAMNDEFEEESRQEALRLMAKKVDASATFGAVDRNWQHAVQAGPEATKETLEVVSMAIEKHPKSSTAKNLPVITNILFKAFDLRREQLALGSDATFDLSDVDEIEETINEVTIKMIYKLNDSTFRPIFTKLLEWATTGVSKKDTQGSLARHTTFYKFLQVFFGTLQSIVTGYASYIIENVVSVLSKASPSNPNTKSLWLATMRLLKNAFEHDQDEFWQSPSHLTKIATPLISQLAHATHPTTATLVINEAIPAITELAVAADSTDNHKELNTVLMRYLRPSAGPTGKAAGGENPHTRLAALKTEQSLTEQLGEEWLALLPEMLPYISELMEDEDENVEKEVRKWVKQIEDVLGEKLDDMLT.

The HEAT 1 repeat unit spans residues 581–618 (MDLQALLPFVLVTLADPSERVRREAAGILTIIGSLHKN). The next 2 membrane-spanning stretches (helical) occupy residues 946–966 (VQSG…AIVN) and 1002–1022 (ALLL…HSVM). HEAT repeat units lie at residues 1046-1083 (QTID…AFEH), 1253-1290 (LSLV…QNPE), 1297-1335 (TRML…KYGK), and 1758-1795 (ALLP…VLGE).

The protein belongs to the HEATR1/UTP10 family. In terms of assembly, component of the ribosomal small subunit (SSU) processome.

Its subcellular location is the nucleus. The protein resides in the nucleolus. It localises to the membrane. Involved in nucleolar processing of pre-18S ribosomal RNA. Involved in ribosome biosynthesis. This Aspergillus oryzae (strain ATCC 42149 / RIB 40) (Yellow koji mold) protein is U3 small nucleolar RNA-associated protein 10.